The primary structure comprises 30 residues: Chassatide C3 (30 aa).

Residues 1 to 30 (GIPCGESCVWIPCISSALGCSCKNKVCYRN) constitute a cross-link (cyclopeptide (Gly-Asn)). 3 cysteine pairs are disulfide-bonded: C4–C20, C8–C22, and C13–C27.

Post-translationally, this is a cyclic peptide. In terms of tissue distribution, expressed in fruit, pedicel, stem and root but not in leaf (at protein level).

Functionally, probably participates in a plant defense mechanism. This is Chassatide C3 from Chassalia chartacea (Chassalia curviflora).